Reading from the N-terminus, the 239-residue chain is Proteasome activator complex subunit 2 (239 aa).

An N-acetylalanine modification is found at A2. S10 is subject to Phosphoserine. The segment at 65-87 is disordered; it reads DIPIPDPPPKDDEMETDKQEKKE. Basic and acidic residues predominate over residues 72–87; the sequence is PPKDDEMETDKQEKKE.

The protein belongs to the PA28 family. Heterodimer of PSME1 and PSME2, which forms a hexameric ring.

Implicated in immunoproteasome assembly and required for efficient antigen processing. The PA28 activator complex enhances the generation of class I binding peptides by altering the cleavage pattern of the proteasome. In Mus musculus (Mouse), this protein is Proteasome activator complex subunit 2 (Psme2).